Here is a 313-residue protein sequence, read N- to C-terminus: Secretory carrier-associated membrane protein 4 (313 aa).

Residues 1 to 69 (MAGRSRYDNP…LPPEPADFYN (69 aa)) are disordered. Residues 1-148 (MAGRSRYDNP…EIPVHLQRTQ (148 aa)) lie on the Cytoplasmic side of the membrane. A coiled-coil region spans residues 85-116 (MKTREKELLAKEAELNRREKEIKRREEAAARA). Transmembrane regions (helical) follow at residues 149–169 (YVAF…IICV), 181–201 (IWFL…YLWY), 216–236 (FGWF…AAVS), and 255–275 (LIGN…MFCL). Over 276–313 (ESLLSMWVIQRVYLYFRGSGKEAEMKREAARSAARAAF) the chain is Cytoplasmic.

The protein belongs to the SCAMP family.

The protein localises to the cell membrane. Its subcellular location is the cytoplasmic vesicle. It localises to the secretory vesicle membrane. In terms of biological role, probably involved in membrane trafficking. The chain is Secretory carrier-associated membrane protein 4 (SCAMP4) from Oryza sativa subsp. japonica (Rice).